A 358-amino-acid polypeptide reads, in one-letter code: Peptide chain release factor 1 (358 aa).

Glutamine 234 carries the post-translational modification N5-methylglutamine. The disordered stretch occupies residues 283-306 (ERLHSERAGQRKSMVGSGDRSERI).

Belongs to the prokaryotic/mitochondrial release factor family. In terms of processing, methylated by PrmC. Methylation increases the termination efficiency of RF1.

It is found in the cytoplasm. Peptide chain release factor 1 directs the termination of translation in response to the peptide chain termination codons UAG and UAA. The protein is Peptide chain release factor 1 of Zymomonas mobilis subsp. mobilis (strain ATCC 31821 / ZM4 / CP4).